A 278-amino-acid chain; its full sequence is MPLRTLLCGLLLAVCLGQHALAASRCSERPRTLLRPAEVSCSYQSTWLDSGLVGQRKIIYQTPLGTPPAGGWPVVLIYQGSFFPLNDFSYHSNLPFGGYYEGKLVQNLLDHGYAVIAPSAPADLFWQTNIPGLAQAYELSTDYDFLGNVLAAIASGHFGPLNAQRQYATGISSGGYNTSRMAVSFPGKFRALAVQSGSYATCSGPLCVVPDQLPADHPPTLFLHGFVDAVVPWWSMDLYYDRLLHQGIETARYTEPLGGHEWFAASPGKVLAWFNAHP.

Positions 1-33 (MPLRTLLCGLLLAVCLGQHALAASRCSERPRTL) are cleaved as a signal peptide.

It is found in the secreted. It carries out the reaction Hydrolyzes the polyester poly{oxycarbonyl[(R)-2-pentylethylene]} to oligomers.. Its function is as follows. Hydrolysis of poly(3-hydroxyoctanoic acid). This Pseudomonas fluorescens protein is Poly(3-hydroxyoctanoate) depolymerase (phaZ).